The sequence spans 318 residues: Ankyrin repeat and SOCS box protein 7 (318 aa).

ANK repeat units lie at residues 13–42, 46–75, 80–109, 116–145, 149–178, 180–208, and 213–242; these read QEELQIQAAVAAGDVHTVRKMLEQGYSPNG, NGWTLLHFSAARGKERCVRVFLEHGADPTV, GGFTALHYAAMHGRARIARLMLESEYRSDI, DGWTPLHVAAHYGRDSFVRLLLEFKAEVDP, KGTTPLQLAIIRERSSCVKILLDHNANIDI, NGFLLRYAVIKSNHSYCRMFLQRGADTNL, and DGQTPLHLSALRDDVLCARMLYNYGADTNT. The SOCS box domain maps to 265–318; it reads LDFLQEVTRQPRNLQDLCRIKIRQCIGLQNLKLLDELPIAKVMKDYLKHKFDDI.

Belongs to the ankyrin SOCS box (ASB) family. Interacts with CUL5. Interacts with RNF7. Interacts with PSRC1.

It functions in the pathway protein modification; protein ubiquitination. Functionally, probable substrate-recognition component of a SCF-like ECS (Elongin-Cullin-SOCS-box protein) E3 ubiquitin-protein ligase complex which mediates the ubiquitination and subsequent proteasomal degradation of target proteins. Plays a role in spindle dynamics and genome integrity by targeting the mitotic progression protein PSRC1 for proteasomal degradation in a cell cycle-dependent manner. Also participates in meiosis by mediating the proper attachment between kinetochores and microtubules. This Homo sapiens (Human) protein is Ankyrin repeat and SOCS box protein 7 (ASB7).